The sequence spans 82 residues: Envelope small membrane protein (82 aa).

Residues 1-16 (MVDVFFTDTAWYVGQI) lie on the Virion surface side of the membrane. The chain crosses the membrane as a helical span at residues 17 to 37 (FFLVLSCVIFLIFVVALLATI). Residues 38-78 (KLCIQICGFCNIFIISPSAYVYNRGRQLYKSYSEHVIPSTL) lie on the Intravirion side of the membrane.

The protein belongs to the betacoronaviruses E protein family. In terms of assembly, homopentamer. Interacts with membrane protein M in the budding compartment of the host cell, which is located between endoplasmic reticulum and the Golgi complex. Interacts with Nucleoprotein.

The protein resides in the host Golgi apparatus membrane. Functionally, plays a central role in virus morphogenesis and assembly. Acts as a viroporin and self-assembles in host membranes forming pentameric protein-lipid pores that allow ion transport. Also plays a role in the induction of apoptosis. In Homo sapiens (Human), this protein is Envelope small membrane protein.